The following is a 293-amino-acid chain: Glycine--tRNA ligase alpha subunit (293 aa).

It belongs to the class-II aminoacyl-tRNA synthetase family. Tetramer of two alpha and two beta subunits.

Its subcellular location is the cytoplasm. The enzyme catalyses tRNA(Gly) + glycine + ATP = glycyl-tRNA(Gly) + AMP + diphosphate. This is Glycine--tRNA ligase alpha subunit from Oceanobacillus iheyensis (strain DSM 14371 / CIP 107618 / JCM 11309 / KCTC 3954 / HTE831).